The primary structure comprises 409 residues: MNANERVIIVGAGHAGATVAMQLRKMDFAGDIILLGDERFSPYQRPPLSKAYLAGEEDAESLKLWPDEIYESKGIMLVQSATVAALDRAGKYVRLADKTEVSYDCLVIATGSRPREIALPGIHLAGVHRLHTIEDADGLKAAIGPGKRVALVGGGYIGLEVAASVVGLGGSAVVIEQQDRVLAGVASVPLSDYLRRAHEDRGVEFLTGVQVARIEGSKGRVTGIRLGDDRLVPCDAAVVCVGVVPNTGLAVAAGLDGANGIVVDHDARTADPAIFAIGDVTCRPMPLYDDRMFCLRSVPNALEQAKQAAAAMMGKPRPKPEVPWFWSHQFDLKVQIAGVPFDADDLVLRGDPAAGAFSAFHMKDGRVLAVETVDAPLEFAAGKQMILRKSVLSREQLVDPRVEVTALAV.

Residues alanine 15, aspartate 37, lysine 50, valine 83, aspartate 279, and valine 298 each contribute to the FAD site.

This sequence belongs to the FAD-dependent oxidoreductase family. FAD serves as cofactor.

Its pathway is terpene metabolism; monoterpene degradation. Its function is as follows. Involved in the degradation of the cyclic monoterpene limonene. Probably part of an electron transfer system involved in the oxidation of limonene to perillyl alcohol. This chain is Probable ferredoxin reductase CtmF, found in Castellaniella defragrans (strain DSM 12143 / CCUG 39792 / 65Phen) (Alcaligenes defragrans).